We begin with the raw amino-acid sequence, 264 residues long: Thymidylate synthase (264 aa).

Arginine 21 contacts dUMP. Histidine 51 is a (6R)-5,10-methylene-5,6,7,8-tetrahydrofolate binding site. 126-127 (RR) provides a ligand contact to dUMP. Cysteine 146 acts as the Nucleophile in catalysis. DUMP is bound by residues 166-169 (RSAD), asparagine 177, and 207-209 (HIY). A (6R)-5,10-methylene-5,6,7,8-tetrahydrofolate-binding site is contributed by aspartate 169. Alanine 263 is a (6R)-5,10-methylene-5,6,7,8-tetrahydrofolate binding site.

The protein belongs to the thymidylate synthase family. Bacterial-type ThyA subfamily. As to quaternary structure, homodimer.

The protein localises to the cytoplasm. It catalyses the reaction dUMP + (6R)-5,10-methylene-5,6,7,8-tetrahydrofolate = 7,8-dihydrofolate + dTMP. The protein operates within pyrimidine metabolism; dTTP biosynthesis. Catalyzes the reductive methylation of 2'-deoxyuridine-5'-monophosphate (dUMP) to 2'-deoxythymidine-5'-monophosphate (dTMP) while utilizing 5,10-methylenetetrahydrofolate (mTHF) as the methyl donor and reductant in the reaction, yielding dihydrofolate (DHF) as a by-product. This enzymatic reaction provides an intracellular de novo source of dTMP, an essential precursor for DNA biosynthesis. This is Thymidylate synthase from Bacteroides fragilis (strain ATCC 25285 / DSM 2151 / CCUG 4856 / JCM 11019 / LMG 10263 / NCTC 9343 / Onslow / VPI 2553 / EN-2).